The following is a 64-amino-acid chain: Large ribosomal subunit protein bL35 (64 aa).

Residues 1 to 55 are disordered; the sequence is MPKMKSNKSVAARFKLTGSGQLKRTRPGKRHKLSKRSSQQKRNLSKQPLVDQGQV. Basic residues predominate over residues 23 to 39; sequence KRTRPGKRHKLSKRSSQ.

The protein belongs to the bacterial ribosomal protein bL35 family.

The sequence is that of Large ribosomal subunit protein bL35 from Chlamydia muridarum (strain MoPn / Nigg).